A 530-amino-acid chain; its full sequence is Arginine--tRNA ligase (530 aa).

The 'HIGH' region motif lies at 113–123; it reads ANPTGPLHIGH.

This sequence belongs to the class-I aminoacyl-tRNA synthetase family. As to quaternary structure, monomer.

It is found in the cytoplasm. The catalysed reaction is tRNA(Arg) + L-arginine + ATP = L-arginyl-tRNA(Arg) + AMP + diphosphate. This is Arginine--tRNA ligase from Campylobacter jejuni subsp. jejuni serotype O:2 (strain ATCC 700819 / NCTC 11168).